A 240-amino-acid polypeptide reads, in one-letter code: MFFVMDPVFLSEITVELVKHSASDSDVVFSARVSTLGSFVAVTDCLSNRDIGLITFLMRERHGSPFEHSHMTFRISAPIFVFREFMRHRIASYNEESGRYKNLDPVFYIPDEKRKLVQIGAPGAYKFEEGTSEQYGLLIEEMKELSLAAYDTYKRLLACGIAREVARMILPLNLYSTMYVTINARSLMNFLSVRTSRANSAFHSYPQREIELCADRIEEIWKGLMPETHAAFEKQGRVAP.

Residues I13–Q235 form the ThyX domain. FAD is bound by residues S64, R87 to R89, and E95. DUMP is bound by residues E84 to R87, E95 to R99, and R167. The ThyX motif signature appears at R87–S97. FAD contacts are provided by residues N183–R185 and N189. Position 194 (R194) interacts with dUMP. R194 functions as the Involved in ionization of N3 of dUMP, leading to its activation in the catalytic mechanism.

This sequence belongs to the thymidylate synthase ThyX family. In terms of assembly, homotetramer. The cofactor is FAD.

The enzyme catalyses dUMP + (6R)-5,10-methylene-5,6,7,8-tetrahydrofolate + NADPH + H(+) = dTMP + (6S)-5,6,7,8-tetrahydrofolate + NADP(+). It participates in pyrimidine metabolism; dTTP biosynthesis. Its function is as follows. Catalyzes the reductive methylation of 2'-deoxyuridine-5'-monophosphate (dUMP) to 2'-deoxythymidine-5'-monophosphate (dTMP) while utilizing 5,10-methylenetetrahydrofolate (mTHF) as the methyl donor, and NADPH and FADH(2) as the reductant. This chain is Flavin-dependent thymidylate synthase, found in Tropheryma whipplei (strain TW08/27) (Whipple's bacillus).